A 511-amino-acid chain; its full sequence is MSKKPAALIILDGFGLRNETVGNAVAQAKKPNFDRYWNQYPHQTLTASGEAVGLPEGQMGNSEVGHLNIGAGRIVYQSLTRVNVAIREGEFERNQTFLDAIKNAKDNDKALHLFGLLSDGGVHSHINHLFALLKLAKSEGLTKVYIHGFLDGRDVGPQTAKTYIQQLNEQVEEIGVGEIASISGRYYSMDRDKRWDRVEKAYRAMAYGEGPSYRSAMDVVDDSYANGIHDEFVIPSVITKENGEPVAKIHDGDSVIFYNFRPDRAIQISNTFTNKDFRDFDRGENHPKNLYFVCLTHFSESVDGYVAFKPVNLDNTVGEVLAQHGLKQLRIAETEKYPHVTFFMSGGREEEFPGEERILINSPKVATYDLKPEMSAYEVKDALVKEIAADKHDAIILNFANPDMVGHSGMVEPTIKAIEAVDECLGEVVDAIIAKGGHAIITADHGNADILITETGEPHTAHTTNPVPVIVTKEGVTLREGGILGDLAPTLLDLLGVEKPKEMTGTSLIQK.

Asp-12 contacts Mn(2+). Phosphotyrosine is present on Tyr-36. Ser-62 is a Mn(2+) binding site. The Phosphoserine intermediate role is filled by Ser-62. Substrate contacts are provided by residues His-123, 153-154, Arg-185, Arg-191, 261-264, and Lys-336; these read RD and RPDR. Positions 403, 407, 444, 445, and 462 each coordinate Mn(2+).

The protein belongs to the BPG-independent phosphoglycerate mutase family. Monomer. The cofactor is Mn(2+).

It carries out the reaction (2R)-2-phosphoglycerate = (2R)-3-phosphoglycerate. The protein operates within carbohydrate degradation; glycolysis; pyruvate from D-glyceraldehyde 3-phosphate: step 3/5. Its function is as follows. Essential for rapid growth and for sporulation. Catalyzes the interconversion of 2-phosphoglycerate and 3-phosphoglycerate. The sequence is that of 2,3-bisphosphoglycerate-independent phosphoglycerate mutase from Bacillus velezensis (strain DSM 23117 / BGSC 10A6 / LMG 26770 / FZB42) (Bacillus amyloliquefaciens subsp. plantarum).